The chain runs to 565 residues: Oxygen-dependent choline dehydrogenase (565 aa).

6-35 contributes to the FAD binding site; sequence DYIIVGAGSAGNTLATRLTEDAGVTVLLLE. The Proton acceptor role is filled by histidine 475.

This sequence belongs to the GMC oxidoreductase family. FAD is required as a cofactor.

It catalyses the reaction choline + A = betaine aldehyde + AH2. It carries out the reaction betaine aldehyde + NAD(+) + H2O = glycine betaine + NADH + 2 H(+). It participates in amine and polyamine biosynthesis; betaine biosynthesis via choline pathway; betaine aldehyde from choline (cytochrome c reductase route): step 1/1. Functionally, involved in the biosynthesis of the osmoprotectant glycine betaine. Catalyzes the oxidation of choline to betaine aldehyde and betaine aldehyde to glycine betaine at the same rate. This Pseudomonas putida (strain ATCC 700007 / DSM 6899 / JCM 31910 / BCRC 17059 / LMG 24140 / F1) protein is Oxygen-dependent choline dehydrogenase.